We begin with the raw amino-acid sequence, 58 residues long: Large ribosomal subunit protein uL30 (58 aa).

This sequence belongs to the universal ribosomal protein uL30 family. As to quaternary structure, part of the 50S ribosomal subunit.

This Cytophaga hutchinsonii (strain ATCC 33406 / DSM 1761 / CIP 103989 / NBRC 15051 / NCIMB 9469 / D465) protein is Large ribosomal subunit protein uL30.